The sequence spans 61 residues: Small ribosomal subunit protein uS14 (61 aa).

Zn(2+)-binding residues include cysteine 24, cysteine 27, cysteine 40, and cysteine 43.

It belongs to the universal ribosomal protein uS14 family. Zinc-binding uS14 subfamily. Part of the 30S ribosomal subunit. Contacts proteins S3 and S10. It depends on Zn(2+) as a cofactor.

Its function is as follows. Binds 16S rRNA, required for the assembly of 30S particles and may also be responsible for determining the conformation of the 16S rRNA at the A site. In Sulfurimonas denitrificans (strain ATCC 33889 / DSM 1251) (Thiomicrospira denitrificans (strain ATCC 33889 / DSM 1251)), this protein is Small ribosomal subunit protein uS14.